Consider the following 192-residue polypeptide: Bifunctional protein PyrR (192 aa).

Residues 49-50 (SG), arginine 90, 111-119 (DDVLFSGRT), arginine 144, and valine 168 each bind substrate. The PRPP-binding signature appears at 107 to 119 (VILVDDVLFSGRT).

The protein belongs to the purine/pyrimidine phosphoribosyltransferase family. PyrR subfamily.

The enzyme catalyses UMP + diphosphate = 5-phospho-alpha-D-ribose 1-diphosphate + uracil. Functionally, regulates the transcription of the pyrimidine nucleotide (pyr) operon in response to exogenous pyrimidines. Its function is as follows. Also displays a weak uracil phosphoribosyltransferase activity which is not physiologically significant. The protein is Bifunctional protein PyrR of Corynebacterium glutamicum (strain ATCC 13032 / DSM 20300 / JCM 1318 / BCRC 11384 / CCUG 27702 / LMG 3730 / NBRC 12168 / NCIMB 10025 / NRRL B-2784 / 534).